Reading from the N-terminus, the 1448-residue chain is Gag-Pol polyprotein (1448 aa).

G2 is lipidated: N-myristoyl glycine; by host. Positions W16–R22 match the Nuclear export signal motif. A Nuclear localization signal motif is present at residues K26–K32. Residues K107–E116 are compositionally biased toward basic and acidic residues. Residues K107 to S129 form a disordered region. Over residues E118 to E128 the composition is skewed to low complexity. Residue Y135 is modified to Phosphotyrosine; by host. CCHC-type zinc fingers lie at residues I393 to A410 and K414 to S431. Basic and acidic residues-rich tracts occupy residues R446 to A460 and G473 to L490. The tract at residues R446–L490 is disordered. The 70-residue stretch at K517–F586 folds into the Peptidase A2 domain. Residue D522 is the For protease activity; shared with dimeric partner of the active site. The Reverse transcriptase domain maps to E640–L830. Residues D706, D781, and D782 each contribute to the Mg(2+) site. The RT 'primer grip' stretch occupies residues F823–H831. Residues W994 to W1010 carry the Tryptophan repeat motif motif. One can recognise an RNase H type-1 domain in the interval I1030–R1153. Positions 1039, 1074, 1094, and 1145 each coordinate Mg(2+). An Integrase-type zinc finger spans residues D1159–Q1200. The Zn(2+) site is built by H1168, H1172, C1196, and C1199. The 151-residue stretch at I1210 to I1360 folds into the Integrase catalytic domain. Mg(2+) is bound by residues D1220 and D1272. Positions F1379–D1426 form a DNA-binding region, integrase-type.

Homotrimer. Interacts with gp41 (via C-terminus). As to quaternary structure, homodimer. The active site consists of two apposed aspartic acid residues. In terms of assembly, heterodimer of p66 RT and p51 RT (RT p66/p51). Heterodimerization of RT is essential for DNA polymerase activity. Despite the sequence identities, p66 RT and p51 RT have distinct folding. Homotetramer; may further associate as a homohexadecamer. The cofactor is Mg(2+). In terms of processing, specific enzymatic cleavages by the viral protease yield mature proteins. The protease is released by autocatalytic cleavage. The polyprotein is cleaved during and after budding, this process is termed maturation. Proteolytic cleavage of p66 RT removes the RNase H domain to yield the p51 RT subunit. Capsid protein p24 is phosphorylated.

It localises to the virion. It is found in the host nucleus. The protein localises to the host cytoplasm. Its subcellular location is the host cell membrane. The catalysed reaction is Specific for a P1 residue that is hydrophobic, and P1' variable, but often Pro.. It carries out the reaction Endohydrolysis of RNA in RNA/DNA hybrids. Three different cleavage modes: 1. sequence-specific internal cleavage of RNA. Human immunodeficiency virus type 1 and Moloney murine leukemia virus enzymes prefer to cleave the RNA strand one nucleotide away from the RNA-DNA junction. 2. RNA 5'-end directed cleavage 13-19 nucleotides from the RNA end. 3. DNA 3'-end directed cleavage 15-20 nucleotides away from the primer terminus.. The enzyme catalyses 3'-end directed exonucleolytic cleavage of viral RNA-DNA hybrid.. It catalyses the reaction DNA(n) + a 2'-deoxyribonucleoside 5'-triphosphate = DNA(n+1) + diphosphate. Its activity is regulated as follows. The viral protease is inhibited by many synthetic protease inhibitors (PIs), such as amprenavir, atazanavir, indinavir, loprinavir, nelfinavir, ritonavir and saquinavir. RT can be inhibited either by nucleoside RT inhibitors (NRTIs) or by non nucleoside RT inhibitors (NNRTIs). NRTIs act as chain terminators, whereas NNRTIs inhibit DNA polymerization by binding a small hydrophobic pocket near the RT active site and inducing an allosteric change in this region. Classical NRTIs are abacavir, adefovir (PMEA), didanosine (ddI), lamivudine (3TC), stavudine (d4T), tenofovir (PMPA), zalcitabine (ddC), and zidovudine (AZT). Classical NNRTIs are atevirdine (BHAP U-87201E), delavirdine, efavirenz (DMP-266), emivirine (I-EBU), and nevirapine (BI-RG-587). The tritherapies used as a basic effective treatment of AIDS associate two NRTIs and one NNRTI. Use of protease inhibitors in tritherapy regimens permit more ambitious therapeutic strategies. Functionally, gag-Pol polyprotein and Gag polyprotein may regulate their own translation, by the binding genomic RNA in the 5'-UTR. At low concentration, Gag-Pol and Gag would promote translation, whereas at high concentration, the polyproteins encapsidate genomic RNA and then shut off translation. Its function is as follows. Matrix protein p17 has two main functions: in infected cell, it targets Gag and Gag-pol polyproteins to the plasma membrane via a multipartite membrane-binding signal, that includes its myristointegration complex. The myristoylation signal and the NLS exert conflicting influences its subcellular localization. The key regulation of these motifs might be phosphorylation of a portion of MA molecules on the C-terminal tyrosine at the time of virus maturation, by virion-associated cellular tyrosine kinase. Implicated in the release from host cell mediated by Vpu. Capsid protein p24 forms the conical core that encapsulates the genomic RNA-nucleocapsid complex in the virion. The core is constituted by capsid protein hexamer subunits. The core is disassembled soon after virion entry. Interaction with host PPIA/CYPA protects the virus from restriction by host TRIM5-alpha and from an unknown antiviral activity in host cells. This capsid restriction by TRIM5 is one of the factors which restricts SIV to the simian species. In terms of biological role, nucleocapsid protein p7 encapsulates and protects viral dimeric unspliced (genomic) RNA. Binds these RNAs through its zinc fingers. Facilitates rearangement of nucleic acid secondary structure during retrotranscription of genomic RNA. This capability is referred to as nucleic acid chaperone activity. Functionally, the aspartyl protease mediates proteolytic cleavages of Gag and Gag-Pol polyproteins during or shortly after the release of the virion from the plasma membrane. Cleavages take place as an ordered, step-wise cascade to yield mature proteins. This process is called maturation. Displays maximal activity during the budding process just prior to particle release from the cell. Also cleaves Nef and Vif, probably concomitantly with viral structural proteins on maturation of virus particles. Hydrolyzes host EIF4GI and PABP1 in order to shut off the capped cellular mRNA translation. The resulting inhibition of cellular protein synthesis serves to ensure maximal viral gene expression and to evade host immune response. Its function is as follows. Reverse transcriptase/ribonuclease H (RT) is a multifunctional enzyme that converts the viral dimeric RNA genome into dsDNA in the cytoplasm, shortly after virus entry into the cell. This enzyme displays a DNA polymerase activity that can copy either DNA or RNA templates, and a ribonuclease H (RNase H) activity that cleaves the RNA strand of RNA-DNA heteroduplexes in a partially processive 3' to 5' endonucleasic mode. Conversion of viral genomic RNA into dsDNA requires many steps. A tRNA binds to the primer-binding site (PBS) situated at the 5'-end of the viral RNA. RT uses the 3' end of the tRNA primer to perform a short round of RNA-dependent minus-strand DNA synthesis. The reading proceeds through the U5 region and ends after the repeated (R) region which is present at both ends of viral RNA. The portion of the RNA-DNA heteroduplex is digested by the RNase H, resulting in a ssDNA product attached to the tRNA primer. This ssDNA/tRNA hybridizes with the identical R region situated at the 3' end of viral RNA. This template exchange, known as minus-strand DNA strong stop transfer, can be either intra- or intermolecular. RT uses the 3' end of this newly synthesized short ssDNA to perform the RNA-dependent minus-strand DNA synthesis of the whole template. RNase H digests the RNA template except for two polypurine tracts (PPTs) situated at the 5'-end and near the center of the genome. It is not clear if both polymerase and RNase H activities are simultaneous. RNase H can probably proceed both in a polymerase-dependent (RNA cut into small fragments by the same RT performing DNA synthesis) and a polymerase-independent mode (cleavage of remaining RNA fragments by free RTs). Secondly, RT performs DNA-directed plus-strand DNA synthesis using the PPTs that have not been removed by RNase H as primers. PPTs and tRNA primers are then removed by RNase H. The 3' and 5' ssDNA PBS regions hybridize to form a circular dsDNA intermediate. Strand displacement synthesis by RT to the PBS and PPT ends produces a blunt ended, linear dsDNA copy of the viral genome that includes long terminal repeats (LTRs) at both ends. Integrase catalyzes viral DNA integration into the host chromosome, by performing a series of DNA cutting and joining reactions. This enzyme activity takes place after virion entry into a cell and reverse transcription of the RNA genome in dsDNA. The first step in the integration process is 3' processing. This step requires a complex comprising the viral genome, matrix protein, Vpr and integrase. This complex is called the pre-integration complex (PIC). The integrase protein removes 2 nucleotides from each 3' end of the viral DNA, leaving recessed CA OH's at the 3' ends. In the second step, the PIC enters cell nucleus. This process is mediated through integrase and Vpr proteins, and allows the virus to infect a non dividing cell. This ability to enter the nucleus is specific of lentiviruses, other retroviruses cannot and rely on cell division to access cell chromosomes. In the third step, termed strand transfer, the integrase protein joins the previously processed 3' ends to the 5' ends of strands of target cellular DNA at the site of integration. The 5'-ends are produced by integrase-catalyzed staggered cuts, 5 bp apart. A Y-shaped, gapped, recombination intermediate results, with the 5'-ends of the viral DNA strands and the 3' ends of target DNA strands remaining unjoined, flanking a gap of 5 bp. The last step is viral DNA integration into host chromosome. This involves host DNA repair synthesis in which the 5 bp gaps between the unjoined strands are filled in and then ligated. Since this process occurs at both cuts flanking the SIV genome, a 5 bp duplication of host DNA is produced at the ends of SIV integration. Alternatively, Integrase may catalyze the excision of viral DNA just after strand transfer, this is termed disintegration. This chain is Gag-Pol polyprotein (gag-pol), found in Pan troglodytes (Chimpanzee).